Consider the following 286-residue polypeptide: Pyridoxal kinase PdxY (286 aa).

Substrate contacts are provided by residues Ser-9 and 44–45 (TQ). 3 residues coordinate ATP: Asp-111, Glu-148, and Lys-181. Asp-222 provides a ligand contact to substrate.

The protein belongs to the pyridoxine kinase family. PdxY subfamily. Homodimer. Mg(2+) serves as cofactor.

The catalysed reaction is pyridoxal + ATP = pyridoxal 5'-phosphate + ADP + H(+). Its pathway is cofactor metabolism; pyridoxal 5'-phosphate salvage; pyridoxal 5'-phosphate from pyridoxal: step 1/1. Pyridoxal kinase involved in the salvage pathway of pyridoxal 5'-phosphate (PLP). Catalyzes the phosphorylation of pyridoxal to PLP. In Actinobacillus succinogenes (strain ATCC 55618 / DSM 22257 / CCUG 43843 / 130Z), this protein is Pyridoxal kinase PdxY.